The sequence spans 138 residues: Large ribosomal subunit protein bL19 (138 aa).

It belongs to the bacterial ribosomal protein bL19 family.

This protein is located at the 30S-50S ribosomal subunit interface and may play a role in the structure and function of the aminoacyl-tRNA binding site. This Rickettsia rickettsii (strain Iowa) protein is Large ribosomal subunit protein bL19.